A 410-amino-acid chain; its full sequence is O-methyltransferase afvC (410 aa).

S-adenosyl-L-methionine-binding positions include 253–254 (GG), aspartate 278, 299–300 (DF), and arginine 315. The Proton acceptor role is filled by histidine 319.

Belongs to the class I-like SAM-binding methyltransferase superfamily. Cation-independent O-methyltransferase family. COMT subfamily.

The protein operates within secondary metabolite biosynthesis. O-methyltransferase; part of the gene cluster that mediates the biosynthesis of aflavarin, a bicoumarin that exhibits anti-insectan activity against the fungivorous beetle C.hemipterus. This is O-methyltransferase afvC from Aspergillus flavus (strain ATCC 200026 / FGSC A1120 / IAM 13836 / NRRL 3357 / JCM 12722 / SRRC 167).